The primary structure comprises 80 residues: Cytochrome c oxidase subunit 7A1, mitochondrial (80 aa).

A mitochondrion-targeting transit peptide spans 1–21; that stretch reads MRALRVSQALVRSFSSSTRSH. Residues 22-46 lie on the Mitochondrial matrix side of the membrane; the sequence is LENRVAEKQKLFQADNDLPVHLKGG. Residues 47 to 75 form a helical membrane-spanning segment; that stretch reads GMDNVLYRLTMTLTLGGTAYCLYCLGWAS. The Mitochondrial intermembrane portion of the chain corresponds to 76–80; the sequence is FPHKK.

It belongs to the cytochrome c oxidase VIIa family. Component of the complex IV (CIV, cytochrome c oxidase), a multisubunit enzyme composed of 14 subunits. The complex is composed of a catalytic core of 3 subunits MT-CO1, MT-CO2 and MT-CO3, encoded in the mitochondrial DNA, and 11 supernumerary subunits COX4I, COX5A, COX5B, COX6A, COX6B, COX6C, COX7A, COX7B, COX7C, COX8 and NDUFA4, which are encoded in the nuclear genome. The complex exists as a monomer or a dimer and forms supercomplexes (SCs) in the inner mitochondrial membrane with NADH-ubiquinone oxidoreductase (complex I, CI) and ubiquinol-cytochrome c oxidoreductase (cytochrome b-c1 complex, complex III, CIII), resulting in different assemblies (supercomplex SCI(1)III(2)IV(1) and megacomplex MCI(2)III(2)IV(2)).

It is found in the mitochondrion inner membrane. The protein operates within energy metabolism; oxidative phosphorylation. Functionally, component of the mitochondrial respiratory complex IV (CIV, also named cytochrome c oxidase complex), the last enzyme in the mitochondrial electron transport chain which drives oxidative phosphorylation. The CIV complex is the component of the respiratory chain that catalyzes the reduction of oxygen to water. Acts as an assembly factor that specifically drives the homodimerization of CIV complexes, mediating the formation of mitochondrial respiratory supercomplexes (respirasomes) containing two CIV: supercomplxes with two molecules of CIV show improved activity. Despite being highly expressed in brown adipose tissue, not required for thermogenesis. This Mus musculus (Mouse) protein is Cytochrome c oxidase subunit 7A1, mitochondrial.